The primary structure comprises 275 residues: NH(3)-dependent NAD(+) synthetase (275 aa).

50–57 (GISGGVDS) is a binding site for ATP. D56 provides a ligand contact to Mg(2+). A deamido-NAD(+)-binding site is contributed by R147. Residue T167 coordinates ATP. E172 provides a ligand contact to Mg(2+). Positions 180 and 187 each coordinate deamido-NAD(+). Residues K196 and T218 each coordinate ATP. 267-268 (HK) is a binding site for deamido-NAD(+).

The protein belongs to the NAD synthetase family. Homodimer.

The catalysed reaction is deamido-NAD(+) + NH4(+) + ATP = AMP + diphosphate + NAD(+) + H(+). Its pathway is cofactor biosynthesis; NAD(+) biosynthesis; NAD(+) from deamido-NAD(+) (ammonia route): step 1/1. In terms of biological role, catalyzes the ATP-dependent amidation of deamido-NAD to form NAD. Uses ammonia as a nitrogen source. The polypeptide is NH(3)-dependent NAD(+) synthetase (Pseudomonas syringae pv. tomato (strain ATCC BAA-871 / DC3000)).